Consider the following 549-residue polypeptide: Cation/acetate symporter ActP (549 aa).

Helical transmembrane passes span 33-53, 77-97, 103-123, 148-168, 183-203, 206-226, 262-282, 303-323, 355-375, 404-424, 428-448, 464-484, and 493-513; these read WQAI…TYWA, LAIA…ALVF, GLIY…LIAE, ILSA…QMVG, IAVV…GMLA, WVQI…AFMV, ISAL…PHIL, GFMG…IMLV, LFLG…VAGL, VSKI…VLFE, IAFM…PIIL, GGWL…TIWV, and IFPY…GIWF.

The protein belongs to the sodium:solute symporter (SSF) (TC 2.A.21) family.

It is found in the cell inner membrane. Functionally, transports acetate. In Salmonella arizonae (strain ATCC BAA-731 / CDC346-86 / RSK2980), this protein is Cation/acetate symporter ActP.